The sequence spans 257 residues: Acetylglutamate kinase (257 aa).

Substrate contacts are provided by residues 41–42 (GG), arginine 63, and asparagine 158.

Belongs to the acetylglutamate kinase family. ArgB subfamily.

The protein resides in the cytoplasm. The enzyme catalyses N-acetyl-L-glutamate + ATP = N-acetyl-L-glutamyl 5-phosphate + ADP. It functions in the pathway amino-acid biosynthesis; L-arginine biosynthesis; N(2)-acetyl-L-ornithine from L-glutamate: step 2/4. Functionally, catalyzes the ATP-dependent phosphorylation of N-acetyl-L-glutamate. The chain is Acetylglutamate kinase from Phocaeicola vulgatus (strain ATCC 8482 / DSM 1447 / JCM 5826 / CCUG 4940 / NBRC 14291 / NCTC 11154) (Bacteroides vulgatus).